Here is a 204-residue protein sequence, read N- to C-terminus: Holliday junction branch migration complex subunit RuvA (204 aa).

The domain I stretch occupies residues 1–64 (MIGKLKGTIE…EDQIRLFGFM (64 aa)). Residues 65–143 (AVLEREWFNL…AFAGEATNIG (79 aa)) are domain II. Positions 144 to 151 (FKQELGEG) are flexible linker. The tract at residues 152–204 (VAPAPVSDAVSALTNLGYSRDQAANAIAAAMKVAGDEADSAKLIRLGLKELSR) is domain III.

Belongs to the RuvA family. Homotetramer. Forms an RuvA(8)-RuvB(12)-Holliday junction (HJ) complex. HJ DNA is sandwiched between 2 RuvA tetramers; dsDNA enters through RuvA and exits via RuvB. An RuvB hexamer assembles on each DNA strand where it exits the tetramer. Each RuvB hexamer is contacted by two RuvA subunits (via domain III) on 2 adjacent RuvB subunits; this complex drives branch migration. In the full resolvosome a probable DNA-RuvA(4)-RuvB(12)-RuvC(2) complex forms which resolves the HJ.

It is found in the cytoplasm. In terms of biological role, the RuvA-RuvB-RuvC complex processes Holliday junction (HJ) DNA during genetic recombination and DNA repair, while the RuvA-RuvB complex plays an important role in the rescue of blocked DNA replication forks via replication fork reversal (RFR). RuvA specifically binds to HJ cruciform DNA, conferring on it an open structure. The RuvB hexamer acts as an ATP-dependent pump, pulling dsDNA into and through the RuvAB complex. HJ branch migration allows RuvC to scan DNA until it finds its consensus sequence, where it cleaves and resolves the cruciform DNA. The polypeptide is Holliday junction branch migration complex subunit RuvA (Rhizobium rhizogenes (strain K84 / ATCC BAA-868) (Agrobacterium radiobacter)).